The sequence spans 146 residues: Large ribosomal subunit protein uL15 (146 aa).

Residues 1–51 are disordered; the sequence is MKLHELQPAAGSRKVRNRVGRGTSSGNGKTAGRGQKGQKARSGGGVRLGFE. Composition is skewed to gly residues over residues 23–35 and 42–51; these read TSSG…GRGQ and SGGGVRLGFE.

This sequence belongs to the universal ribosomal protein uL15 family. Part of the 50S ribosomal subunit.

Functionally, binds to the 23S rRNA. This Streptococcus gordonii (strain Challis / ATCC 35105 / BCRC 15272 / CH1 / DL1 / V288) protein is Large ribosomal subunit protein uL15.